Here is a 283-residue protein sequence, read N- to C-terminus: 2-dehydro-3-deoxyphosphooctonate aldolase (283 aa).

This sequence belongs to the KdsA family.

It is found in the cytoplasm. It catalyses the reaction D-arabinose 5-phosphate + phosphoenolpyruvate + H2O = 3-deoxy-alpha-D-manno-2-octulosonate-8-phosphate + phosphate. Its pathway is carbohydrate biosynthesis; 3-deoxy-D-manno-octulosonate biosynthesis; 3-deoxy-D-manno-octulosonate from D-ribulose 5-phosphate: step 2/3. The protein operates within bacterial outer membrane biogenesis; lipopolysaccharide biosynthesis. In Prochlorococcus marinus (strain MIT 9313), this protein is 2-dehydro-3-deoxyphosphooctonate aldolase.